Reading from the N-terminus, the 252-residue chain is Undecaprenyl-diphosphatase (252 aa).

Helical transmembrane passes span 1–21 (MTTLEAVILGIVEGLTEFLPI), 42–62 (HKAFEVSIQLGSILAVVFLYF), 74–94 (ILIAFIPTGILGFVLYKIIKS), 95–115 (LFNPYIVVFMLVFGGLLLILI), 172–192 (AAEFSFMLAVPTMFMATFYDV), 206–226 (NLIVGFVVAFISALFAIKWLL), and 232–252 (HSFIPFGIYRIILGILYYLWY).

Belongs to the UppP family.

Its subcellular location is the cell inner membrane. The catalysed reaction is di-trans,octa-cis-undecaprenyl diphosphate + H2O = di-trans,octa-cis-undecaprenyl phosphate + phosphate + H(+). Catalyzes the dephosphorylation of undecaprenyl diphosphate (UPP). Confers resistance to bacitracin. This is Undecaprenyl-diphosphatase from Sulfurihydrogenibium sp. (strain YO3AOP1).